Reading from the N-terminus, the 166-residue chain is Photosystem I assembly protein Ycf3 (166 aa).

TPR repeat units follow at residues 31–64 (AFKY…EEDP), 68–101 (SYIL…NPNL), and 116–149 (GEQA…APNN).

The protein belongs to the Ycf3 family.

The protein resides in the cellular thylakoid membrane. In terms of biological role, essential for the assembly of the photosystem I (PSI) complex. May act as a chaperone-like factor to guide the assembly of the PSI subunits. This Acaryochloris marina (strain MBIC 11017) protein is Photosystem I assembly protein Ycf3.